The chain runs to 379 residues: Chaperone protein DnaJ (379 aa).

Positions 5–70 (DYYETLGCDR…QKRAAYDRFG (66 aa)) constitute a J domain. The CR-type zinc-finger motif lies at 134 to 212 (GKTAQIKIPT…CGGAGRVTRE (79 aa)). Positions 147, 150, 164, 167, 186, 189, 200, and 203 each coordinate Zn(2+). 4 CXXCXGXG motif repeats span residues 147–154 (CETCSGTG), 164–171 (CRMCGGAG), 186–193 (CPNCQGRG), and 200–207 (CSDCGGAG).

This sequence belongs to the DnaJ family. As to quaternary structure, homodimer. Requires Zn(2+) as cofactor.

It localises to the cytoplasm. Participates actively in the response to hyperosmotic and heat shock by preventing the aggregation of stress-denatured proteins and by disaggregating proteins, also in an autonomous, DnaK-independent fashion. Unfolded proteins bind initially to DnaJ; upon interaction with the DnaJ-bound protein, DnaK hydrolyzes its bound ATP, resulting in the formation of a stable complex. GrpE releases ADP from DnaK; ATP binding to DnaK triggers the release of the substrate protein, thus completing the reaction cycle. Several rounds of ATP-dependent interactions between DnaJ, DnaK and GrpE are required for fully efficient folding. Also involved, together with DnaK and GrpE, in the DNA replication of plasmids through activation of initiation proteins. The chain is Chaperone protein DnaJ from Xanthobacter autotrophicus (strain ATCC BAA-1158 / Py2).